The primary structure comprises 468 residues: Glutamate--tRNA ligase (468 aa).

The 'HIGH' region signature appears at 8-18; the sequence is PSPTGFLHVGG. Cysteine 97, cysteine 99, cysteine 124, and aspartate 126 together coordinate Zn(2+). Positions 236–240 match the 'KMSKS' region motif; sequence KLSKR. Lysine 239 contacts ATP.

It belongs to the class-I aminoacyl-tRNA synthetase family. Glutamate--tRNA ligase type 1 subfamily. As to quaternary structure, monomer. Zn(2+) is required as a cofactor.

It localises to the cytoplasm. It carries out the reaction tRNA(Glu) + L-glutamate + ATP = L-glutamyl-tRNA(Glu) + AMP + diphosphate. Functionally, catalyzes the attachment of glutamate to tRNA(Glu) in a two-step reaction: glutamate is first activated by ATP to form Glu-AMP and then transferred to the acceptor end of tRNA(Glu). This Francisella tularensis subsp. mediasiatica (strain FSC147) protein is Glutamate--tRNA ligase.